The sequence spans 280 residues: Borealin (280 aa).

The segment at 1–58 (MAPRKGSSRVAKTNSLRRRKLASFLKDFDREVEIRIKQIESDRQNLLKEVDNLYNIEI) is required for interaction with INCENP. Residues 1–88 (MAPRKGSSRV…NKQALEEAAT (88 aa)) form a required for centromere localization region. The required for interaction with SENP3 stretch occupies residues 1–140 (MAPRKGSSRV…ENERKNLQTA (140 aa)). A required to form a minimal CPC core complex that localizes to the central spindle and midbody and properly executes the role of the CPC during cytokinesis region spans residues 10 to 109 (VAKTNSLRRR…TAEAIQTPLK (100 aa)). The required for interaction with INCENP and BIRC5 stretch occupies residues 20–78 (KLASFLKDFDREVEIRIKQIESDRQNLLKEVDNLYNIEILRLPKALREMNWLDYFALGG). Phosphothreonine; by TTK is present on residues T88 and T94. Phosphothreonine is present on T106. S110 bears the Phosphoserine mark. The tract at residues 130-169 (EENERKNLQTARVKRCPPSKKRTQSIQGKGKGKRSSRANT) is disordered. Residue K135 forms a Glycyl lysine isopeptide (Lys-Gly) (interchain with G-Cter in SUMO2) linkage. Residues 141-152 (RVKRCPPSKKRT) show a composition bias toward basic residues. Position 165 is a phosphoserine; by AURKB (S165). Position 169 is a phosphothreonine; by TTK (T169). 2 positions are modified to phosphothreonine: T189 and T204. S219 and S224 each carry phosphoserine. Position 230 is a phosphothreonine; by TTK (T230). Phosphoserine is present on residues S238 and S244.

The protein belongs to the borealin family. As to quaternary structure, may form homooligomers and homodimers. Component of the chromosomal passenger complex (CPC) composed of at least BIRC5/survivin, CDCA8/borealin, INCENP, AURKB or AURKC; in the complex forms a triple-helix bundle-based subcomplex with INCENP and BIRC5. Interacts with SENP3, UBE2I and RANBP2. Interacts (phosphorylated) with SGO1 and SGO2; the association is dependent on CDK1. Phosphorylated by TTK, essentially at Thr-88, Thr94, Thr-169 and Thr-230. Phosphorylation (probably by CDK1) promotes targeting of the CPC to centromeric DNA. In terms of processing, sumoylated by UBE2I and RANBP2. Desumoylated by SENP3 through the removal of SUMO2 and SUMO3.

It is found in the nucleus. The protein localises to the nucleolus. Its subcellular location is the cytoplasm. It localises to the chromosome. The protein resides in the centromere. It is found in the cytoskeleton. The protein localises to the spindle. Functionally, component of the chromosomal passenger complex (CPC), a complex that acts as a key regulator of mitosis. The CPC complex has essential functions at the centromere in ensuring correct chromosome alignment and segregation and is required for chromatin-induced microtubule stabilization and spindle assembly. In the complex, it may be required to direct the CPC to centromeric DNA. This is Borealin (CDCA8) from Pongo abelii (Sumatran orangutan).